The primary structure comprises 29 residues: Toxin II.9 (29 aa).

The LCN-type CS-alpha/beta domain maps to 2–29 (KDGYLVNKYTGCKVNCYKLGENKFCNRE).

Belongs to the long (4 C-C) scorpion toxin superfamily. Sodium channel inhibitor family. Beta subfamily. In terms of tissue distribution, expressed by the venom gland.

It is found in the secreted. Functionally, binds to sodium channels (Nav) and shift the voltage of activation toward more negative potentials. This toxin is active on crustaceans. The chain is Toxin II.9 from Centruroides limpidus (Mexican scorpion).